Reading from the N-terminus, the 223-residue chain is Ribose-5-phosphate isomerase A (223 aa).

Substrate is bound by residues 28–31 (TGST), 81–84 (DGTD), and 94–97 (KGGG). Glu103 serves as the catalytic Proton acceptor. Lys121 lines the substrate pocket.

It belongs to the ribose 5-phosphate isomerase family. As to quaternary structure, homodimer.

It catalyses the reaction aldehydo-D-ribose 5-phosphate = D-ribulose 5-phosphate. It participates in carbohydrate degradation; pentose phosphate pathway; D-ribose 5-phosphate from D-ribulose 5-phosphate (non-oxidative stage): step 1/1. Catalyzes the reversible conversion of ribose-5-phosphate to ribulose 5-phosphate. The protein is Ribose-5-phosphate isomerase A of Baumannia cicadellinicola subsp. Homalodisca coagulata.